The sequence spans 493 residues: Aluminum-activated malate transporter 1 (493 aa).

The next 5 membrane-spanning stretches (helical) occupy residues 28–48 (VGLA…GPFT), 51–71 (FGIN…FSVG), 104–124 (TVEP…STFV), 133–153 (KFDY…LSGF), and 169–189 (VVIG…VWAG). 2 positions are modified to phosphoserine: Ser320 and Ser327. Residue Thr385 is modified to Phosphothreonine. Basic and acidic residues predominate over residues 441 to 452 (DNDRSNNVDDSR). A disordered region spans residues 441-460 (DNDRSNNVDDSRGGSSQDSC).

Belongs to the aromatic acid exporter (TC 2.A.85) family. Post-translationally, phosphorylated. A reversible phosphorylation is required for activation. Expressed in roots, but not in shoots. Detected in the root apex in absence of aluminum stress and in root apices, the stele and endodermis of the elongating zone of primary and lateral roots after aluminum stress. Not expressed in cortical and epidermal cells.

It localises to the cell membrane. Activated by external aluminum. Malate transporter critical for aluminum tolerance. The STOP1 transcription factor is required for ALMT1 expression. The polypeptide is Aluminum-activated malate transporter 1 (ALMT1) (Arabidopsis thaliana (Mouse-ear cress)).